The following is a 356-amino-acid chain: Tyrosine recombinase XerS (356 aa).

Positions L16–T121 constitute a Core-binding (CB) domain. The Tyr recombinase domain maps to K169 to D354. Active-site residues include R210, K234, H306, R309, and H332. The active-site O-(3'-phospho-DNA)-tyrosine intermediate is Y341.

Belongs to the 'phage' integrase family. XerS subfamily.

It localises to the cytoplasm. With respect to regulation, ftsK is required for recombination. Functionally, site-specific tyrosine recombinase, which acts by catalyzing the cutting and rejoining of the recombining DNA molecules. Essential to convert dimers of the bacterial chromosome into monomers to permit their segregation at cell division. The chain is Tyrosine recombinase XerS from Streptococcus thermophilus (strain ATCC BAA-250 / LMG 18311).